The following is a 32-amino-acid chain: Cytochrome b6-f complex subunit 7 (32 aa).

A helical membrane pass occupies residues 9 to 27 (AAVFWVLIPVGLLGGVLLL).

The protein belongs to the PetM family. In terms of assembly, the 4 large subunits of the cytochrome b6-f complex are cytochrome b6, subunit IV (17 kDa polypeptide, PetD), cytochrome f and the Rieske protein, while the 4 small subunits are PetG, PetL, PetM and PetN. The complex functions as a dimer.

The protein localises to the cellular thylakoid membrane. Component of the cytochrome b6-f complex, which mediates electron transfer between photosystem II (PSII) and photosystem I (PSI), cyclic electron flow around PSI, and state transitions. The sequence is that of Cytochrome b6-f complex subunit 7 from Prochlorococcus marinus (strain NATL1A).